A 257-amino-acid polypeptide reads, in one-letter code: AN1-type zinc finger protein 2B (257 aa).

AN1-type zinc fingers lie at residues 4–52 (PDLG…QKDI) and 94–142 (KIFT…HPTS). Cysteine 10, cysteine 15, cysteine 25, cysteine 28, cysteine 33, histidine 36, histidine 42, cysteine 44, cysteine 100, cysteine 105, cysteine 115, cysteine 118, cysteine 123, histidine 126, histidine 132, and cysteine 134 together coordinate Zn(2+). The VCP/p97-interacting motif (VIM) stretch occupies residues 141 to 151 (TSRAGLAAISR). The interval 153 to 187 (QAVASTSTVPSPSQTMPSCTSPSRATTRSPSWTAP) is disordered. Polar residues predominate over residues 155–171 (VASTSTVPSPSQTMPSC). 2 positions are modified to phosphoserine: serine 163 and serine 173. Over residues 172 to 186 (TSPSRATTRSPSWTA) the composition is skewed to low complexity. UIM domains follow at residues 197-216 (SEDE…TKPQ) and 221-240 (QEEE…AEYQ). Cysteine methyl ester is present on cysteine 254. Residue cysteine 254 is the site of S-geranylgeranyl cysteine attachment. The CAAX motif signature appears at 254–257 (CSLC). A propeptide spans 255–257 (SLC) (removed in mature form).

Binds 'Lys-48'-linked polyubiquitin chains of ubiquitinated proteins. Associates with the proteasome complex; upon exposure to arsenite. Interacts (via VIM motif) with VCP; the interaction is direct. Interacts with BAG6. Interacts with IGF1R (nascent precursor form). Interacts with DERL1, FAF2, NPLOC4 and UFD1; probably through VCP. Phosphorylated by MAPK14. Phosphorylation has no effect on association with the proteasome complex.

It localises to the endoplasmic reticulum membrane. Plays a role in protein homeostasis by regulating both the translocation and the ubiquitin-mediated proteasomal degradation of nascent proteins at the endoplasmic reticulum. It is involved in the regulation of signal-mediated translocation of proteins into the endoplasmic reticulum. It also plays a role in the ubiquitin-mediated proteasomal degradation of proteins for which signal-mediated translocation to the endoplasmic reticulum has failed. May therefore function in the endoplasmic reticulum stress-induced pre-emptive quality control, a mechanism that selectively attenuates the translocation of newly synthesized proteins into the endoplasmic reticulum and reroutes them to the cytosol for proteasomal degradation. By controlling the steady-state expression of the IGF1R receptor, indirectly regulates the insulin-like growth factor receptor signaling pathway. This Homo sapiens (Human) protein is AN1-type zinc finger protein 2B.